The primary structure comprises 134 residues: Arsenate reductase 1 (134 aa).

Residues Cys-11, Cys-83, and Cys-90 each act as nucleophile in the active site. 2 cysteine pairs are disulfide-bonded: Cys-11–Cys-83 and Cys-83–Cys-90.

This sequence belongs to the low molecular weight phosphotyrosine protein phosphatase family. Thioredoxin-coupled ArsC subfamily.

It localises to the cytoplasm. The enzyme catalyses arsenate + [thioredoxin]-dithiol + H(+) = arsenite + [thioredoxin]-disulfide + H2O. Functionally, catalyzes the reduction of arsenate [As(V)] to arsenite [As(III)]. The chain is Arsenate reductase 1 from Bacillus cereus (strain ATCC 10987 / NRS 248).